Here is a 199-residue protein sequence, read N- to C-terminus: Inosine triphosphate pyrophosphatase (199 aa).

12–17 (TGNAKK) is a binding site for ITP. Residue E42 participates in Mg(2+) binding. ITP is bound by residues K54, 70–71 (DT), K87, 146–149 (FGWD), K169, and 174–175 (HR).

Belongs to the HAM1 NTPase family. As to quaternary structure, homodimer. Mg(2+) serves as cofactor. It depends on Mn(2+) as a cofactor.

The protein resides in the cytoplasm. The catalysed reaction is ITP + H2O = IMP + diphosphate + H(+). It carries out the reaction dITP + H2O = dIMP + diphosphate + H(+). The enzyme catalyses XTP + H2O = XMP + diphosphate + H(+). In terms of biological role, pyrophosphatase that hydrolyzes non-canonical purine nucleotides such as inosine triphosphate (ITP), deoxyinosine triphosphate (dITP) or xanthosine 5'-triphosphate (XTP) to their respective monophosphate derivatives. The enzyme does not distinguish between the deoxy- and ribose forms. Probably excludes non-canonical purines from RNA and DNA precursor pools, thus preventing their incorporation into RNA and DNA and avoiding chromosomal lesions. The protein is Inosine triphosphate pyrophosphatase of Monosiga brevicollis (Choanoflagellate).